Consider the following 313-residue polypeptide: Glutathione synthetase (313 aa).

Positions 125-309 constitute an ATP-grasp domain; it reads KIFVTEFADL…IASLFWDAVE (185 aa). 151 to 207 serves as a coordination point for ATP; sequence RKEFGDIIVKPLYGNGGAGIFHLHEADRNLASLLEMFGQLFREPYIVQRYLKDVRKG. Mg(2+)-binding residues include glutamate 280 and asparagine 282.

Belongs to the prokaryotic GSH synthase family. Mg(2+) serves as cofactor. It depends on Mn(2+) as a cofactor.

It catalyses the reaction gamma-L-glutamyl-L-cysteine + glycine + ATP = glutathione + ADP + phosphate + H(+). It participates in sulfur metabolism; glutathione biosynthesis; glutathione from L-cysteine and L-glutamate: step 2/2. The sequence is that of Glutathione synthetase from Mesorhizobium japonicum (strain LMG 29417 / CECT 9101 / MAFF 303099) (Mesorhizobium loti (strain MAFF 303099)).